Reading from the N-terminus, the 189-residue chain is Class A basic helix-loop-helix protein 15 (189 aa).

Basic residues predominate over residues 1-12 (MKTKNRPPRRRA). Disordered stretches follow at residues 1 to 85 (MKTK…ERER) and 167 to 189 (TEAQ…REGT). Thr25 bears the Phosphothreonine mark. Residues 68 to 85 (GRRDSSIQRRLESNERER) are compositionally biased toward basic and acidic residues. Residues 75–127 (QRRLESNERERQRMHKLNNAFQALREVIPHVRADKKLSKIETLTLAKNYIKSL) form the bHLH domain.

In terms of assembly, forms homodimers or heterodimers with TCF3 gene products E12 and E47. These dimers bind to the E-box site, however, heterodimer with MYOD1 does not bind target DNA. As to expression, expressed in brain, liver, spleen and skeletal muscle.

It localises to the nucleus. Its function is as follows. Plays a role in controlling the transcriptional activity of MYOD1, ensuring that expanding myoblast populations remain undifferentiated. Repression may occur through muscle-specific E-box occupancy by homodimers. May also negatively regulate bHLH-mediated transcription through an N-terminal repressor domain. Serves as a key regulator of acinar cell function, stability, and identity. Also required for normal organelle localization in exocrine cells and for mitochondrial calcium ion transport. May function as a unique regulator of gene expression in several different embryonic and postnatal cell lineages. Binds to the E-box consensus sequence 5'-CANNTG-3'. The sequence is that of Class A basic helix-loop-helix protein 15 (BHLHA15) from Homo sapiens (Human).